The chain runs to 243 residues: Venom nerve growth factor 1 (243 aa).

The signal sequence occupies residues M1–A18. The propeptide occupies V19–R125. Disulfide bonds link C139–C204, C182–C232, and C192–C234. A glycan (N-linked (GlcNAc...) asparagine) is linked at N148.

The protein belongs to the NGF-beta family. As to quaternary structure, homodimer; non-covalently linked. As to expression, expressed by the venom gland.

The protein localises to the secreted. Functionally, nerve growth factor is important for the development and maintenance of the sympathetic and sensory nervous systems. It stimulates division and differentiation of sympathetic and embryonic sensory neurons as well as basal forebrain cholinergic neurons in the brain. Its relevance in the snake venom is not clear. However, it has been shown to inhibit metalloproteinase-dependent proteolysis of platelet glycoprotein Ib alpha, suggesting a metalloproteinase inhibition to prevent metalloprotease autodigestion and/or protection against prey proteases. Binds a lipid between the two protein chains in the homodimer. The lipid-bound form promotes histamine relase from mouse mast cells, contrary to the lipid-free form. The sequence is that of Venom nerve growth factor 1 from Naja sputatrix (Malayan spitting cobra).